Here is a 211-residue protein sequence, read N- to C-terminus: Prolactin (211 aa).

The first 24 residues, 1 to 24 (MTHRRTKLFMMAAVVSYVMTSCGA), serve as a signal peptide directing secretion. 2 cysteine pairs are disulfide-bonded: Cys-70/Cys-184 and Cys-201/Cys-211.

It belongs to the somatotropin/prolactin family.

It is found in the secreted. This Paralichthys olivaceus (Bastard halibut) protein is Prolactin (prl).